We begin with the raw amino-acid sequence, 219 residues long: Adenylate kinase (219 aa).

Residue 10–15 (GAGKGT) participates in ATP binding. Positions 30 to 59 (STGDMLRAAIREGTELGLKAKSVMESGGLV) are NMP. Residues threonine 31, arginine 36, 57–59 (GLV), 85–88 (GFPR), and glutamine 92 each bind AMP. Residues 122–159 (GRRQHPASGRVYHIEYNPPKVEGKDDVTGEELVQRPDD) form an LID region. Residues arginine 123 and 132 to 133 (VY) each bind ATP. AMP-binding residues include arginine 156 and arginine 167. Arginine 202 contributes to the ATP binding site.

The protein belongs to the adenylate kinase family. As to quaternary structure, monomer.

It localises to the cytoplasm. It catalyses the reaction AMP + ATP = 2 ADP. It functions in the pathway purine metabolism; AMP biosynthesis via salvage pathway; AMP from ADP: step 1/1. In terms of biological role, catalyzes the reversible transfer of the terminal phosphate group between ATP and AMP. Plays an important role in cellular energy homeostasis and in adenine nucleotide metabolism. The protein is Adenylate kinase of Acinetobacter baylyi (strain ATCC 33305 / BD413 / ADP1).